Consider the following 170-residue polypeptide: FMRFamide-like neuropeptides 6 (170 aa).

Positions 1–19 are cleaved as a signal peptide; that stretch reads MNSRGLILTLGVVIAVAFA. Q20 is modified (pyrrolidone carboxylic acid). F39 bears the Phenylalanine amide mark. Positions 42 to 51 are excised as a propeptide; the sequence is SDGGNPMEME. F60 is modified (phenylalanine amide). Residues 63–81 constitute a propeptide that is removed on maturation; the sequence is RSSGGDEQELVGGDDIDME. At F90 the chain carries Phenylalanine amide. Positions 93–104 are excised as a propeptide; the sequence is RSGPQEDDMPME. F113 bears the Phenylalanine amide mark. A propeptide spanning residues 116 to 136 is cleaved from the precursor; the sequence is RSSDMEVIGNEGVDGDAHDLF. F145 carries the post-translational modification Phenylalanine amide. Residues 148–159 constitute a propeptide that is removed on maturation; the sequence is RSMGEEEDHDMM. The tract at residues 150-170 is disordered; that stretch reads MGEEEDHDMMKRKSAYMRFGR. Residues 159-170 are compositionally biased toward basic residues; sequence MKRKSAYMRFGR. At F168 the chain carries Phenylalanine amide.

This sequence belongs to the FARP (FMRFamide related peptide) family. In terms of tissue distribution, each flp gene is expressed in a distinct set of neurons. Flp-6 is expressed in the ASE sensory neurons, AFD, ASG, PVT and I1 neurons.

Its subcellular location is the secreted. Its function is as follows. FMRFamides and FMRFamide-like peptides are neuropeptides. KSAYMRF-amide has an excitatory effect on dissected pharyngeal myogenic muscle system. The polypeptide is FMRFamide-like neuropeptides 6 (Caenorhabditis elegans).